The chain runs to 254 residues: 2-dehydro-3-deoxy-D-gluconate 5-dehydrogenase (254 aa).

Residue 16–40 participates in NAD(+) binding; the sequence is LVTGPGTGIGQGIAKALAGAGADII. Ser-146 is a substrate binding site. Tyr-159 acts as the Proton acceptor in catalysis.

Belongs to the short-chain dehydrogenases/reductases (SDR) family.

It carries out the reaction 2-dehydro-3-deoxy-D-gluconate + NAD(+) = 3-deoxy-D-glycero-2,5-hexodiulosonate + NADH + H(+). Its pathway is glycan metabolism; pectin degradation; 2-dehydro-3-deoxy-D-gluconate from pectin: step 5/5. In terms of biological role, catalyzes the reduction of 2,5-diketo-3-deoxygluconate (DKII or 4,6-dihydroxy-2,5-dioxohexanoate) into 2-keto-3-deoxygluconate (KDG or 2-dehydro-3-deoxygluconate) with a concomitant oxidation of NADH. This chain is 2-dehydro-3-deoxy-D-gluconate 5-dehydrogenase (kduD), found in Bacillus subtilis (strain 168).